We begin with the raw amino-acid sequence, 344 residues long: Holliday junction branch migration complex subunit RuvB (344 aa).

The large ATPase domain (RuvB-L) stretch occupies residues 1-180 (MSRIVSGEAQ…FGIPVRLEFY (180 aa)). ATP is bound by residues Leu19, Arg20, Gly61, Lys64, Thr65, Thr66, Arg170, Tyr180, and Arg217. Thr65 provides a ligand contact to Mg(2+). The interval 181–251 (THDELARVLL…AAAAALARLD (71 aa)) is small ATPAse domain (RuvB-S). The tract at residues 254–344 (EVGLDALDRR…AAPPADLFDK (91 aa)) is head domain (RuvB-H). 3 residues coordinate DNA: Arg290, Arg309, and Arg314.

Belongs to the RuvB family. In terms of assembly, homohexamer. Forms an RuvA(8)-RuvB(12)-Holliday junction (HJ) complex. HJ DNA is sandwiched between 2 RuvA tetramers; dsDNA enters through RuvA and exits via RuvB. An RuvB hexamer assembles on each DNA strand where it exits the tetramer. Each RuvB hexamer is contacted by two RuvA subunits (via domain III) on 2 adjacent RuvB subunits; this complex drives branch migration. In the full resolvosome a probable DNA-RuvA(4)-RuvB(12)-RuvC(2) complex forms which resolves the HJ.

It is found in the cytoplasm. The catalysed reaction is ATP + H2O = ADP + phosphate + H(+). Its function is as follows. The RuvA-RuvB-RuvC complex processes Holliday junction (HJ) DNA during genetic recombination and DNA repair, while the RuvA-RuvB complex plays an important role in the rescue of blocked DNA replication forks via replication fork reversal (RFR). RuvA specifically binds to HJ cruciform DNA, conferring on it an open structure. The RuvB hexamer acts as an ATP-dependent pump, pulling dsDNA into and through the RuvAB complex. RuvB forms 2 homohexamers on either side of HJ DNA bound by 1 or 2 RuvA tetramers; 4 subunits per hexamer contact DNA at a time. Coordinated motions by a converter formed by DNA-disengaged RuvB subunits stimulates ATP hydrolysis and nucleotide exchange. Immobilization of the converter enables RuvB to convert the ATP-contained energy into a lever motion, pulling 2 nucleotides of DNA out of the RuvA tetramer per ATP hydrolyzed, thus driving DNA branch migration. The RuvB motors rotate together with the DNA substrate, which together with the progressing nucleotide cycle form the mechanistic basis for DNA recombination by continuous HJ branch migration. Branch migration allows RuvC to scan DNA until it finds its consensus sequence, where it cleaves and resolves cruciform DNA. The protein is Holliday junction branch migration complex subunit RuvB of Phenylobacterium zucineum (strain HLK1).